A 129-amino-acid polypeptide reads, in one-letter code: uncharacterized protein (129 aa).

The signal sequence occupies residues 1–20; sequence MIYPLFRICILGAFLLGSYA.

This is an uncharacterized protein from Saccharomyces cerevisiae (strain ATCC 204508 / S288c) (Baker's yeast).